The following is a 429-amino-acid chain: Choline kinase A2 (429 aa).

ATP contacts are provided by residues 82-88 (KGGMSNM), Arg111, 152-158 (EYIPSRP), and Gln257. Substrate is bound at residue 84-86 (GMS). Ca(2+) is bound at residue Glu258. Residue Asp301 coordinates ATP. Positions 320 and 323 each coordinate Ca(2+).

Belongs to the choline/ethanolamine kinase family. In terms of assembly, homodimer. A small proportion exists as higher oligomers. The cofactor is Mg(2+).

It carries out the reaction choline + ATP = phosphocholine + ADP + H(+). It catalyses the reaction ethanolamine + ATP = phosphoethanolamine + ADP + H(+). The protein operates within phospholipid metabolism; phosphatidylcholine biosynthesis; phosphocholine from choline: step 1/1. Its pathway is phospholipid metabolism; phosphatidylethanolamine biosynthesis; phosphatidylethanolamine from ethanolamine: step 1/3. Its activity is regulated as follows. Inhibited by Ca(2+). Mild inhibition by high levels of Mg(2+)(&gt;10 mM). Functionally, catalyzes the first step in phosphatidylcholine biosynthesis. May contribute to phosphatidylethanolamine biosynthesis. Phosphorylates choline and ethanolamine but the activity is much higher with choline. This is Choline kinase A2 from Caenorhabditis elegans.